A 398-amino-acid polypeptide reads, in one-letter code: MPLEVVVELQIRAISCPGVFLPDKEVVYLGVYLLNQYLETDCFPSVFPIVIQQSMRFEKVFEEAMDPGAVAELLESFLTRFELVQLVSPAWEELAYYEKNTRDFLFPEPKLTSSHLGMQREVLMKTAIWFPGIAPKLEFSTRTAILECVFPCKNRFLWEERCKLQQSFSKLNGPANNRKKKPKEKNSDQLSKGTPFWGPSPQRLHLHRPTQRNPGKSFRFLGERKPPFVVRHVDSGNPFGENNLEHHSQKSRRKPKFINFDLAKKRAFSLDSLEANIKVVREPDERIVLRSQSPPPLNSGHFRKPLLNHQGDVDFHPETTVTTSQLSSPPSPLDHSLLQERFQPCSASMWQKIQERACSLLTPNRAHPKEDSISETNSIHERPSYLLRKHLLREHRYF.

The tract at residues 170 to 215 is disordered; it reads KLNGPANNRKKKPKEKNSDQLSKGTPFWGPSPQRLHLHRPTQRNPG. A phosphoserine mark is found at S269 and S272.

It belongs to the SPATA6 family.

The sequence is that of Spermatogenesis associated 6-like protein (Spata6l) from Rattus norvegicus (Rat).